Here is a 408-residue protein sequence, read N- to C-terminus: UPF0754 membrane protein Tery_3973 (408 aa).

2 consecutive transmembrane segments (helical) span residues 4-24 (IWLY…TNDI) and 385-405 (IVNL…ILLV).

This sequence belongs to the UPF0754 family.

It localises to the cell inner membrane. This is UPF0754 membrane protein Tery_3973 from Trichodesmium erythraeum (strain IMS101).